Here is a 166-residue protein sequence, read N- to C-terminus: Phosphopantetheine adenylyltransferase (166 aa).

Thr10 lines the substrate pocket. Residues 10–11 (TF) and His18 each bind ATP. Residues Lys42, Leu74, and Arg88 each contribute to the substrate site. Residues 89–91 (GLR), Glu99, and 124–130 (NSFISSS) contribute to the ATP site.

Belongs to the bacterial CoaD family. As to quaternary structure, homohexamer. Mg(2+) is required as a cofactor.

Its subcellular location is the cytoplasm. It carries out the reaction (R)-4'-phosphopantetheine + ATP + H(+) = 3'-dephospho-CoA + diphosphate. Its pathway is cofactor biosynthesis; coenzyme A biosynthesis; CoA from (R)-pantothenate: step 4/5. Functionally, reversibly transfers an adenylyl group from ATP to 4'-phosphopantetheine, yielding dephospho-CoA (dPCoA) and pyrophosphate. The chain is Phosphopantetheine adenylyltransferase from Idiomarina loihiensis (strain ATCC BAA-735 / DSM 15497 / L2-TR).